Consider the following 745-residue polypeptide: 1,4-alpha-glucan branching enzyme GlgB (745 aa).

Aspartate 416 functions as the Nucleophile in the catalytic mechanism. Glutamate 469 serves as the catalytic Proton donor.

Belongs to the glycosyl hydrolase 13 family. GlgB subfamily. In terms of assembly, monomer.

The catalysed reaction is Transfers a segment of a (1-&gt;4)-alpha-D-glucan chain to a primary hydroxy group in a similar glucan chain.. The protein operates within glycan biosynthesis; glycogen biosynthesis. Catalyzes the formation of the alpha-1,6-glucosidic linkages in glycogen by scission of a 1,4-alpha-linked oligosaccharide from growing alpha-1,4-glucan chains and the subsequent attachment of the oligosaccharide to the alpha-1,6 position. This is 1,4-alpha-glucan branching enzyme GlgB from Shewanella sp. (strain MR-7).